The chain runs to 197 residues: Transcription factor FapR (197 aa).

This sequence belongs to the FapR family.

In terms of biological role, transcriptional factor involved in regulation of membrane lipid biosynthesis by repressing genes involved in fatty acid and phospholipid metabolism. The protein is Transcription factor FapR of Bacillus cereus (strain 03BB102).